A 365-amino-acid chain; its full sequence is Histidinol-phosphate aminotransferase 2 (365 aa).

Residue Lys-226 is modified to N6-(pyridoxal phosphate)lysine.

Belongs to the class-II pyridoxal-phosphate-dependent aminotransferase family. Histidinol-phosphate aminotransferase subfamily. As to quaternary structure, homodimer. The cofactor is pyridoxal 5'-phosphate.

The enzyme catalyses L-histidinol phosphate + 2-oxoglutarate = 3-(imidazol-4-yl)-2-oxopropyl phosphate + L-glutamate. The protein operates within amino-acid biosynthesis; L-histidine biosynthesis; L-histidine from 5-phospho-alpha-D-ribose 1-diphosphate: step 7/9. In Pasteurella multocida (strain Pm70), this protein is Histidinol-phosphate aminotransferase 2 (hisC2).